A 51-amino-acid chain; its full sequence is Sperm protamine P1 (51 aa).

The protein belongs to the protamine P1 family. Testis.

It localises to the nucleus. The protein localises to the chromosome. Functionally, protamines substitute for histones in the chromatin of sperm during the haploid phase of spermatogenesis. They compact sperm DNA into a highly condensed, stable and inactive complex. This is Sperm protamine P1 (PRM1) from Piliocolobus badius (Western red colobus).